Here is a 325-residue protein sequence, read N- to C-terminus: Coiled-coil domain-containing protein 130 homolog (325 aa).

Residues L156 to E262 adopt a coiled-coil conformation.

It belongs to the CWC16 family.

In Dictyostelium discoideum (Social amoeba), this protein is Coiled-coil domain-containing protein 130 homolog.